We begin with the raw amino-acid sequence, 177 residues long: Large ribosomal subunit protein uL6 (177 aa).

The span at 156 to 171 (PYKGKGVRYDTETIRR) shows a compositional bias: basic and acidic residues. The disordered stretch occupies residues 156-177 (PYKGKGVRYDTETIRRKEGKKK).

The protein belongs to the universal ribosomal protein uL6 family. As to quaternary structure, part of the 50S ribosomal subunit.

Functionally, this protein binds to the 23S rRNA, and is important in its secondary structure. It is located near the subunit interface in the base of the L7/L12 stalk, and near the tRNA binding site of the peptidyltransferase center. In Gluconacetobacter diazotrophicus (strain ATCC 49037 / DSM 5601 / CCUG 37298 / CIP 103539 / LMG 7603 / PAl5), this protein is Large ribosomal subunit protein uL6.